Here is a 452-residue protein sequence, read N- to C-terminus: Ethanolamine kinase 1 (452 aa).

Residues 26 to 64 (AVQTRIGNSAASRRSPAARPPVPAPPALPRGRPGTEGST) form a disordered region. Pro residues predominate over residues 43 to 53 (ARPPVPAPPAL).

This sequence belongs to the choline/ethanolamine kinase family. As to expression, expressed in kidney, liver, placenta, heart, leukocyte, ovary and testis.

It localises to the cytoplasm. The catalysed reaction is ethanolamine + ATP = phosphoethanolamine + ADP + H(+). The protein operates within phospholipid metabolism; phosphatidylethanolamine biosynthesis; phosphatidylethanolamine from ethanolamine: step 1/3. In terms of biological role, highly specific for ethanolamine phosphorylation. May be a rate-controlling step in phosphatidylethanolamine biosynthesis. This chain is Ethanolamine kinase 1, found in Homo sapiens (Human).